The chain runs to 66 residues: Phylloseptin-H7 (66 aa).

The first 22 residues, 1–22 (MAFLKKSLFLVLFLGLVSLSIC), serve as a signal peptide directing secretion. Positions 23–44 (EEEKRETEEEENDQEEDDKSEE) are excised as a propeptide. A disordered region spans residues 25 to 44 (EKRETEEEENDQEEDDKSEE). Positions 30-41 (EEEENDQEEDDK) are enriched in acidic residues. The residue at position 65 (L65) is a Leucine amide.

As to expression, expressed by the skin glands.

The protein resides in the secreted. Has antimicrobial activity. In Pithecopus hypochondrialis (Orange-legged leaf frog), this protein is Phylloseptin-H7.